A 267-amino-acid polypeptide reads, in one-letter code: 4-hydroxy-tetrahydrodipicolinate reductase (267 aa).

NAD(+) is bound by residues 9–14 (GAAGRM) and aspartate 35. Arginine 36 is a binding site for NADP(+). Residues 99–101 (GTT) and 123–126 (APNY) each bind NAD(+). The active-site Proton donor/acceptor is the histidine 156. Histidine 157 is a binding site for (S)-2,3,4,5-tetrahydrodipicolinate. The active-site Proton donor is the lysine 160. Residue 166–167 (GT) participates in (S)-2,3,4,5-tetrahydrodipicolinate binding.

It belongs to the DapB family.

The protein localises to the cytoplasm. It carries out the reaction (S)-2,3,4,5-tetrahydrodipicolinate + NAD(+) + H2O = (2S,4S)-4-hydroxy-2,3,4,5-tetrahydrodipicolinate + NADH + H(+). It catalyses the reaction (S)-2,3,4,5-tetrahydrodipicolinate + NADP(+) + H2O = (2S,4S)-4-hydroxy-2,3,4,5-tetrahydrodipicolinate + NADPH + H(+). The protein operates within amino-acid biosynthesis; L-lysine biosynthesis via DAP pathway; (S)-tetrahydrodipicolinate from L-aspartate: step 4/4. Its function is as follows. Catalyzes the conversion of 4-hydroxy-tetrahydrodipicolinate (HTPA) to tetrahydrodipicolinate. The chain is 4-hydroxy-tetrahydrodipicolinate reductase from Alkalilimnicola ehrlichii (strain ATCC BAA-1101 / DSM 17681 / MLHE-1).